Here is a 259-residue protein sequence, read N- to C-terminus: DNA-directed RNA polymerase subunit Rpo3 (259 aa).

It belongs to the archaeal Rpo3/eukaryotic RPB3 RNA polymerase subunit family. In terms of assembly, part of the RNA polymerase complex.

It is found in the cytoplasm. The enzyme catalyses RNA(n) + a ribonucleoside 5'-triphosphate = RNA(n+1) + diphosphate. In terms of biological role, DNA-dependent RNA polymerase (RNAP) catalyzes the transcription of DNA into RNA using the four ribonucleoside triphosphates as substrates. The protein is DNA-directed RNA polymerase subunit Rpo3 of Thermococcus kodakarensis (strain ATCC BAA-918 / JCM 12380 / KOD1) (Pyrococcus kodakaraensis (strain KOD1)).